The sequence spans 319 residues: RWD domain-containing protein 2B (319 aa).

Residues 41 to 165 (AELDLLASMF…EWVREHASGY (125 aa)) enclose the RWD domain. Serine 275 bears the Phosphoserine mark.

As to expression, ubiquitous.

The protein is RWD domain-containing protein 2B (RWDD2B) of Homo sapiens (Human).